Reading from the N-terminus, the 580-residue chain is Peptide transporter PTR_B (580 aa).

Over residues 1 to 30 the composition is skewed to basic and acidic residues; it reads MSTEKLQNDDKVVDEKYVDADEHSLVRSQD. The interval 1–45 is disordered; it reads MSTEKLQNDDKVVDEKYVDADEHSLVRSQDESFPQTEEGGEPTDH. Residues 57-78 traverse the membrane as a helical segment; it reads IPMSCWLVAIVELSERFTYYGL. N-linked (GlcNAc...) asparagine glycosylation is present at N101. Helical transmembrane passes span 107 to 127, 134 to 154, 163 to 183, 219 to 239, 249 to 269, 326 to 346, 370 to 390, 402 to 422, 449 to 469, 484 to 504, and 513 to 533; these read ALSY…AWIA, YFTI…LFIT, TTSL…TGGI, VSNV…SVIA, FWAA…ALVL, ALYA…YGQM, INSI…YPFI, IFWG…LQHF, IALQ…ASIT, SFIM…GIAL, and MVWT…IFWF.

Belongs to the major facilitator superfamily. Proton-dependent oligopeptide transporter (POT/PTR) (TC 2.A.17) family.

The protein localises to the cell membrane. The enzyme catalyses a dipeptide(out) + H(+)(out) = a dipeptide(in) + H(+)(in). It catalyses the reaction an L-amino acid tripeptide(out) + H(+)(out) = an L-amino acid tripeptide(in) + H(+)(in). Functionally, peptide transporter that exploits the inwardly directed proton motive force to facilitate the cellular uptake of di/tripeptides. Shows strong uptake specificity towards the dipeptides Tyr-Phe and Gly-His, when compared to PTR_A and PTR_C. This chain is Peptide transporter PTR_B, found in Candidozyma auris (Yeast).